We begin with the raw amino-acid sequence, 240 residues long: Small ribosomal subunit protein uS2 (240 aa).

This sequence belongs to the universal ribosomal protein uS2 family.

The sequence is that of Small ribosomal subunit protein uS2 from Haemophilus influenzae (strain 86-028NP).